Reading from the N-terminus, the 609-residue chain is mRNA cap guanine-N(7) methyltransferase (609 aa).

Residues 1-10 are compositionally biased toward basic and acidic residues; the sequence is MASKEEERTG. The disordered stretch occupies residues 1–252; that stretch reads MASKEEERTG…EEDAMRNSQS (252 aa). 2 stretches are compositionally biased toward low complexity: residues 28–47 and 70–87; these read QPVV…ATPT and PQTT…QQKQ. Positions 148-163 are enriched in basic and acidic residues; sequence ANDRPISKRKRLEERH. Positions 193–205 are enriched in pro residues; it reads PRSPSPPLPPRSP. Positions 233-247 are enriched in basic and acidic residues; it reads RRQEERERALEEDAM. Residues 278 to 590 form the mRNA cap 0 methyltransferase domain; that stretch reads SKIKGLRSFN…KYTPLGFTSA (313 aa). 287–288 provides a ligand contact to mRNA; that stretch reads NN. Residues Lys291, Gly314, Asp338, Asp379, 422 to 424, and Tyr427 contribute to the S-adenosyl-L-methionine site; that span reads MFA.

Belongs to the class I-like SAM-binding methyltransferase superfamily. mRNA cap 0 methyltransferase family.

It is found in the nucleus. The enzyme catalyses a 5'-end (5'-triphosphoguanosine)-ribonucleoside in mRNA + S-adenosyl-L-methionine = a 5'-end (N(7)-methyl 5'-triphosphoguanosine)-ribonucleoside in mRNA + S-adenosyl-L-homocysteine. In terms of biological role, responsible for methylating the 5'-cap structure of mRNAs. The protein is mRNA cap guanine-N(7) methyltransferase (abd1) of Aspergillus niger (strain ATCC MYA-4892 / CBS 513.88 / FGSC A1513).